The following is a 238-amino-acid chain: 3,4-dihydroxy-2-butanone 4-phosphate synthase (238 aa).

Residues 26-27, Asp-31, 166-170, and Glu-190 each bind D-ribulose 5-phosphate; these read RE and RVGQT. Glu-27 is a Mg(2+) binding site.

This sequence belongs to the DHBP synthase family. Homodimer. Mg(2+) is required as a cofactor. Mn(2+) serves as cofactor.

The catalysed reaction is D-ribulose 5-phosphate = (2S)-2-hydroxy-3-oxobutyl phosphate + formate + H(+). It functions in the pathway cofactor biosynthesis; riboflavin biosynthesis; 2-hydroxy-3-oxobutyl phosphate from D-ribulose 5-phosphate: step 1/1. Catalyzes the conversion of D-ribulose 5-phosphate to formate and 3,4-dihydroxy-2-butanone 4-phosphate. The polypeptide is 3,4-dihydroxy-2-butanone 4-phosphate synthase (Archaeoglobus fulgidus (strain ATCC 49558 / DSM 4304 / JCM 9628 / NBRC 100126 / VC-16)).